The following is a 580-amino-acid chain: MVASLLCTVAVAVLAVAAVGGEAGVVEHTFVVHEMNVTHLCNTTKIFVVNGQLPGPTVDVTEGDTVVVHVVNKIPHGLTIHWHGVRQLRSCWADGAGFITECPIPPGSERTYRFNVTDQVGTLWWHAHVTCLRSTINGAFIIRPRDGKYPFPTPVKDVPIIIGEWWELDLVELDRRMRDGNFDDNPLSATINGKLGDLSNCSGIVEESFVLNVKHGESYLLRVINTAFFSEYYFKVAGHTFTVVGADGNYLTPFKTDMVTVAPGEAIDVLMVADAPPAHYHMIVLANQPPEPDPQIPEYISRGLVRYTSADANNNGLPVPMPIMPNQHNTMPSYYFHANLTGLMHPKHRRVPMHVDERIFIILGLGTICRGRKHTCKRQRSLETIELSTMNNVSFTHPYTTALLERYYDGTPEGVYTEDFPVRPPRPYNYTNPALIPPGPLEEVLEPTFKATKLKRFKYNTSVEIIFQSSTLLMSDSNPMHLHGYDVFLLAQGLGSFNAKRDIRKFNYHNPQLRNTILVPRGGWAAVRFITDNPGMWYLHCHFEFHIIMGMATAFIVEDGPTPETSLPPPPPEFKRCDAS.

The first 23 residues, Met-1 to Ala-23, serve as a signal peptide directing secretion. Plastocyanin-like domains follow at residues Val-31–Gly-147 and Lys-156–Ala-310. Residues Asn-36 and Asn-42 are each glycosylated (N-linked (GlcNAc...) asparagine). Residues His-81 and His-83 each coordinate Cu cation. N-linked (GlcNAc...) asparagine glycosylation is present at Asn-115. The Cu cation site is built by His-126 and His-128. N-linked (GlcNAc...) asparagine glycosylation is found at Asn-200, Asn-339, Asn-392, Asn-429, and Asn-460. A Plastocyanin-like 3 domain is found at Asp-419–Pro-561. Cu cation-binding residues include Asn-478, His-481, His-483, His-540, Cys-541, His-542, His-546, and Met-551. The disordered stretch occupies residues Gly-560 to Ser-580.

Belongs to the multicopper oxidase family. Cu cation is required as a cofactor.

The protein resides in the secreted. It localises to the extracellular space. The protein localises to the apoplast. The enzyme catalyses 4 hydroquinone + O2 = 4 benzosemiquinone + 2 H2O. In terms of biological role, lignin degradation and detoxification of lignin-derived products. This chain is Laccase-20 (LAC20), found in Oryza sativa subsp. indica (Rice).